Reading from the N-terminus, the 1336-residue chain is DNA-directed RNA polymerase subunit beta' (1336 aa).

Cysteine 60, cysteine 62, cysteine 75, and cysteine 78 together coordinate Zn(2+). Residues aspartate 535, aspartate 537, and aspartate 539 each contribute to the Mg(2+) site. Residues cysteine 902, cysteine 984, cysteine 991, and cysteine 994 each coordinate Zn(2+).

The protein belongs to the RNA polymerase beta' chain family. The RNAP catalytic core consists of 2 alpha, 1 beta, 1 beta' and 1 omega subunit. When a sigma factor is associated with the core the holoenzyme is formed, which can initiate transcription. Requires Mg(2+) as cofactor. The cofactor is Zn(2+).

It carries out the reaction RNA(n) + a ribonucleoside 5'-triphosphate = RNA(n+1) + diphosphate. DNA-dependent RNA polymerase catalyzes the transcription of DNA into RNA using the four ribonucleoside triphosphates as substrates. This Corynebacterium diphtheriae (strain ATCC 700971 / NCTC 13129 / Biotype gravis) protein is DNA-directed RNA polymerase subunit beta'.